A 66-amino-acid chain; its full sequence is Large ribosomal subunit protein bL35 (66 aa).

Over residues 1–46 (MPKMKTHRASAKRFKRTANGGLKRHHAFTGHRFHGKTKKQRRHLRK) the composition is skewed to basic residues. The segment at 1–52 (MPKMKTHRASAKRFKRTANGGLKRHHAFTGHRFHGKTKKQRRHLRKPAMVSR) is disordered.

It belongs to the bacterial ribosomal protein bL35 family.

This Lactobacillus acidophilus (strain ATCC 700396 / NCK56 / N2 / NCFM) protein is Large ribosomal subunit protein bL35.